The sequence spans 494 residues: 4-trimethylaminobutyraldehyde dehydrogenase (494 aa).

Serine 2 bears the N-acetylserine mark. N6-acetyllysine; alternate is present on lysine 30. Lysine 30 bears the N6-succinyllysine; alternate mark. Lysine 59 is subject to N6-succinyllysine. NAD(+)-binding positions include lysine 180 and 232–236; that span reads GSVPT. The Proton acceptor role is filled by glutamate 254. Cysteine 288 acts as the Nucleophile in catalysis. Lysine 298 is subject to N6-acetyllysine. At lysine 303 the chain carries N6-acetyllysine; alternate. At lysine 303 the chain carries N6-succinyllysine; alternate. Lysine 344 is subject to N6-acetyllysine. Residue glutamate 391 coordinates NAD(+).

This sequence belongs to the aldehyde dehydrogenase family. Homotetramer.

It is found in the cytoplasm. It localises to the cytosol. The catalysed reaction is 4-(trimethylamino)butanal + NAD(+) + H2O = 4-(trimethylamino)butanoate + NADH + 2 H(+). The enzyme catalyses an aldehyde + NAD(+) + H2O = a carboxylate + NADH + 2 H(+). It carries out the reaction 4-aminobutanal + NAD(+) + H2O = 4-aminobutanoate + NADH + 2 H(+). It catalyses the reaction formaldehyde + NAD(+) + H2O = formate + NADH + 2 H(+). The catalysed reaction is acetaldehyde + NAD(+) + H2O = acetate + NADH + 2 H(+). The enzyme catalyses imidazole-4-acetaldehyde + NAD(+) + H2O = imidazole-4-acetate + NADH + 2 H(+). It carries out the reaction acrolein + NAD(+) + H2O = acrylate + NADH + 2 H(+). It catalyses the reaction (5-hydroxyindol-3-yl)acetaldehyde + NAD(+) + H2O = (5-hydroxyindol-3-yl)acetate + NADH + 2 H(+). The catalysed reaction is 3,4-dihydroxyphenylacetaldehyde + NAD(+) + H2O = 3,4-dihydroxyphenylacetate + NADH + 2 H(+). The enzyme catalyses spermine monoaldehyde + NAD(+) + H2O = N-(2-carboxyethyl)spermidine + NADH + 2 H(+). It carries out the reaction propanal + NAD(+) + H2O = propanoate + NADH + 2 H(+). It catalyses the reaction butanal + NAD(+) + H2O = butanoate + NADH + 2 H(+). The catalysed reaction is pentanal + NAD(+) + H2O = pentanoate + NADH + 2 H(+). The enzyme catalyses hexanal + NAD(+) + H2O = hexanoate + NADH + 2 H(+). It participates in amine and polyamine biosynthesis; carnitine biosynthesis. Converts gamma-trimethylaminobutyraldehyde into gamma-butyrobetaine with high efficiency (in vitro). Can catalyze the irreversible oxidation of a broad range of aldehydes to the corresponding acids in an NAD-dependent reaction, but with low efficiency. Catalyzes the oxidation of aldehydes arising from biogenic amines and polyamines. The sequence is that of 4-trimethylaminobutyraldehyde dehydrogenase (ALDH9A1) from Pongo abelii (Sumatran orangutan).